A 56-amino-acid chain; its full sequence is Potassium channel toxin alpha-KTx 9.2 (56 aa).

The signal sequence occupies residues Met-1 to Ala-28. Disulfide bonds link Cys-31-Cys-47, Cys-34-Cys-52, and Cys-38-Cys-54.

In terms of tissue distribution, expressed by the venom gland.

Its subcellular location is the secreted. Functionally, blocks small conductance calcium-activated potassium channels (KCNN, SK). Low toxicity by intracerebroventricular injection into mice. This Olivierus martensii (Manchurian scorpion) protein is Potassium channel toxin alpha-KTx 9.2.